We begin with the raw amino-acid sequence, 174 residues long: tRNA (cytidine(56)-2'-O)-methyltransferase (174 aa).

S-adenosyl-L-methionine-binding positions include Leu-80, 105–109 (GAEKV), and 123–130 (ISNQPHSE).

Belongs to the aTrm56 family. Homodimer.

The protein localises to the cytoplasm. The enzyme catalyses cytidine(56) in tRNA + S-adenosyl-L-methionine = 2'-O-methylcytidine(56) in tRNA + S-adenosyl-L-homocysteine + H(+). In terms of biological role, specifically catalyzes the AdoMet-dependent 2'-O-ribose methylation of cytidine at position 56 in tRNAs. In Metallosphaera sedula (strain ATCC 51363 / DSM 5348 / JCM 9185 / NBRC 15509 / TH2), this protein is tRNA (cytidine(56)-2'-O)-methyltransferase.